A 218-amino-acid polypeptide reads, in one-letter code: Peptide methionine sulfoxide reductase MsrA (218 aa).

The active site involves C57.

Belongs to the MsrA Met sulfoxide reductase family.

It catalyses the reaction L-methionyl-[protein] + [thioredoxin]-disulfide + H2O = L-methionyl-(S)-S-oxide-[protein] + [thioredoxin]-dithiol. The enzyme catalyses [thioredoxin]-disulfide + L-methionine + H2O = L-methionine (S)-S-oxide + [thioredoxin]-dithiol. Has an important function as a repair enzyme for proteins that have been inactivated by oxidation. Catalyzes the reversible oxidation-reduction of methionine sulfoxide in proteins to methionine. The chain is Peptide methionine sulfoxide reductase MsrA from Brucella anthropi (Ochrobactrum anthropi).